The chain runs to 249 residues: Eukaryotic translation initiation factor 3 subunit K (249 aa).

The PCI domain occupies 46-222 (FDCYANLALL…VKVPSNKENE (177 aa)).

This sequence belongs to the eIF-3 subunit K family. In terms of assembly, component of the eukaryotic translation initiation factor 3 (eIF-3) complex.

The protein resides in the cytoplasm. In terms of biological role, component of the eukaryotic translation initiation factor 3 (eIF-3) complex, which is involved in protein synthesis of a specialized repertoire of mRNAs and, together with other initiation factors, stimulates binding of mRNA and methionyl-tRNAi to the 40S ribosome. The eIF-3 complex specifically targets and initiates translation of a subset of mRNAs involved in cell proliferation. In Aspergillus clavatus (strain ATCC 1007 / CBS 513.65 / DSM 816 / NCTC 3887 / NRRL 1 / QM 1276 / 107), this protein is Eukaryotic translation initiation factor 3 subunit K.